The primary structure comprises 462 residues: MAKFRRRTCIILALFILFIFSLMMGLKMLRPNTATFGAPFGLDLLPELHQRTIHLGKNFDFQKSDRINSETNTKNLKSVEITMKPSKASELNLDELPPLNNYLHVFYYSWYGNPQFDGKYIHWNHPVLEHWDPRIAKNYPQGRHNPPDDIGSSFYPELGSYSSRDPSVIETHMRQMRSASIGVLALSWYPPDVNDENGEPTDNLVPTILDKAHKYNLKVTFHIEPYSNRDDQNMYKNVKYIIDKYGNHPAFYRYKTKTGNALPMFYVYDSYITKPEKWANLLTTSGSRSIRNSPYDGLFIALLVEEKHKYDILQSGFDGIYTYFATNGFTYGSSHQNWASLKLFCDKYNLIFIPSVGPGYIDTSIRPWNTQNTRNRINGKYYEIGLSAALQTRPSLISITSFNEWHEGTQIEKAVPKRTSNTVYLDYRPHKPGLYLELTRKWSEKYSKERATYALDRQLPVS.

Residues 1–8 (MAKFRRRT) lie on the Cytoplasmic side of the membrane. Residues 9 to 29 (CIILALFILFIFSLMMGLKML) traverse the membrane as a helical; Signal-anchor for type II membrane protein segment. Residues 30-462 (RPNTATFGAP…YALDRQLPVS (433 aa)) are Lumenal-facing. The interval 60–462 (DFQKSDRINS…YALDRQLPVS (403 aa)) is catalytic.

It belongs to the glycosyl hydrolase 99 family. Undergoes proteolytic cleavage in the C-terminal region. Highly expressed in the liver and kidney. Expressed at lower levels in muscle, pancreas, heart, placenta, lung and brain.

It localises to the golgi apparatus membrane. The enzyme catalyses N-{alpha-Glc-(1-&gt;3)-alpha-Man-(1-&gt;2)-alpha-Man-(1-&gt;2)-alpha-Man-(1-&gt;3)-[alpha-Man-(1-&gt;2)-alpha-Man-(1-&gt;3)-[alpha-Man-(1-&gt;2)-alpha-Man-(1-&gt;6)]-alpha-Man-(1-&gt;6)]-beta-Man-(1-&gt;4)-beta-GlcNAc-(1-&gt;4)-beta-GlcNAc}-L-asparaginyl-[protein] + H2O = alpha-D-glucosyl-(1-&gt;3)-D-mannopyranose + N(4)-{alpha-D-Man-(1-&gt;2)-alpha-D-Man-(1-&gt;3)-[alpha-D-Man-(1-&gt;2)-alpha-D-Man-(1-&gt;3)-[alpha-D-Man-(1-&gt;2)-alpha-D-Man-(1-&gt;6)]-alpha-D-Man-(1-&gt;6)]-beta-D-Man-(1-&gt;4)-beta-D-GlaNAc-(1-&gt;4)-beta-D-GlcNAc}-L-asparaginyl-[protein] (N-glucan mannose isomer 8A1,2,3B1,2). This Homo sapiens (Human) protein is Glycoprotein endo-alpha-1,2-mannosidase (MANEA).